We begin with the raw amino-acid sequence, 663 residues long: Pescadillo homolog (663 aa).

The segment covering Gln311–Glu321 has biased composition (basic and acidic residues). Disordered stretches follow at residues Gln311–Ser360, Thr428–Gln447, and Ala504–Ala663. Over residues Thr322–Lys334 the composition is skewed to acidic residues. Positions Asp361 to Pro477 constitute a BRCT domain. Residues Pro501–Ala663 adopt a coiled-coil conformation. Over residues Asp526–Glu567 the composition is skewed to acidic residues. Residues Val591–Lys620 show a composition bias toward basic and acidic residues.

Belongs to the pescadillo family. As to quaternary structure, component of the NOP7 complex, composed of erb1, nop7 and ytm1. The complex is held together by erb1, which interacts with nop7 via its N-terminal domain and with ytm1 via a high-affinity interaction between the seven-bladed beta-propeller domains of the 2 proteins. The NOP7 complex associates with the 66S pre-ribosome.

It localises to the nucleus. The protein localises to the nucleolus. Its subcellular location is the nucleoplasm. Its function is as follows. Component of the NOP7 complex, which is required for maturation of the 25S and 5.8S ribosomal RNAs and formation of the 60S ribosome. The chain is Pescadillo homolog (nop7) from Neurospora crassa (strain ATCC 24698 / 74-OR23-1A / CBS 708.71 / DSM 1257 / FGSC 987).